The following is a 197-amino-acid chain: Chromophore lyase CpcT/CpeT (197 aa).

Belongs to the CpcT/CpeT biliprotein lyase family.

Covalently attaches a chromophore to Cys residue(s) of phycobiliproteins. The protein is Chromophore lyase CpcT/CpeT of Synechococcus sp. (strain WH8103).